A 548-amino-acid chain; its full sequence is 1,3-beta-glucanosyltransferase gel4 (548 aa).

An N-terminal signal peptide occupies residues 1–25 (MKFVYAAAGASLVGSALATLPVIEA). Residues Asn51 and Asn69 are each glycosylated (N-linked (GlcNAc...) asparagine). Cys88 and Cys117 are disulfide-bonded. (1,3-beta-D-glucosyl)n is bound by residues Tyr106, 133–141 (SAPSESINR), Asn174, and Glu175. Catalysis depends on Glu175, which acts as the Proton donor. A glycan (N-linked (GlcNAc...) asparagine) is linked at Asn181. (1,3-beta-D-glucosyl)n-binding residues include Asp217 and Arg222. 5 disulfides stabilise this stretch: Cys231-Cys364, Cys249-Cys280, Cys386-Cys437, Cys395-Cys461, and Cys414-Cys419. The Nucleophile role is filled by Glu277. Position 309 (Tyr309) interacts with (1,3-beta-D-glucosyl)n. The N-linked (GlcNAc...) asparagine glycan is linked to Asn425. The GPI-like-anchor amidated alanine moiety is linked to residue Ala519. Residues 520 to 548 (SPMAVKVGNWQFGAYIATALFAGVGMLVL) constitute a propeptide, removed in mature form.

This sequence belongs to the glycosyl hydrolase 72 family. In terms of processing, the GPI-like anchor contains a phosphoceramide lipid group.

It is found in the cell membrane. Functionally, splits internally a 1,3-beta-glucan molecule and transfers the newly generated reducing end (the donor) to the non-reducing end of another 1,3-beta-glucan molecule (the acceptor) forming a 1,3-beta linkage, resulting in the elongation of 1,3-beta-glucan chains in the cell wall. Involved in cell wall morphogenesis. The protein is 1,3-beta-glucanosyltransferase gel4 (gel4) of Aspergillus fumigatus (strain ATCC MYA-4609 / CBS 101355 / FGSC A1100 / Af293) (Neosartorya fumigata).